We begin with the raw amino-acid sequence, 209 residues long: MQNIRLISHPLIEHKLTILRDKNTDPFQFRMLIDEITYLMLFEASRDFELKDTEVITPVATTKSKKLAQKIMICPILRAALGMLGSVFKLLPDASVGFLGFQRDEKTLKAEFYYAKLPKDHAERIAIVIDPMFATGGTAIDAVRFLKEKGVKKIKFISILAAPEGLNRFSEVYPDVEVYTAAIDRGLNEKGYIIPGLGDAGDRVFNTVY.

Residues arginine 78, arginine 103, and aspartate 130 to threonine 138 each bind 5-phospho-alpha-D-ribose 1-diphosphate. Uracil contacts are provided by residues isoleucine 193 and glycine 198–alanine 200. Aspartate 199 is a 5-phospho-alpha-D-ribose 1-diphosphate binding site.

This sequence belongs to the UPRTase family. It depends on Mg(2+) as a cofactor.

The catalysed reaction is UMP + diphosphate = 5-phospho-alpha-D-ribose 1-diphosphate + uracil. Its pathway is pyrimidine metabolism; UMP biosynthesis via salvage pathway; UMP from uracil: step 1/1. Its activity is regulated as follows. Allosterically activated by GTP. Catalyzes the conversion of uracil and 5-phospho-alpha-D-ribose 1-diphosphate (PRPP) to UMP and diphosphate. In Campylobacter fetus subsp. fetus (strain 82-40), this protein is Uracil phosphoribosyltransferase.